The primary structure comprises 98 residues: Co-chaperonin GroES (98 aa).

This sequence belongs to the GroES chaperonin family. As to quaternary structure, heptamer of 7 subunits arranged in a ring. Interacts with the chaperonin GroEL.

The protein resides in the cytoplasm. Its function is as follows. Together with the chaperonin GroEL, plays an essential role in assisting protein folding. The GroEL-GroES system forms a nano-cage that allows encapsulation of the non-native substrate proteins and provides a physical environment optimized to promote and accelerate protein folding. GroES binds to the apical surface of the GroEL ring, thereby capping the opening of the GroEL channel. The polypeptide is Co-chaperonin GroES (Bartonella tribocorum (strain CIP 105476 / IBS 506)).